The sequence spans 491 residues: Ketol-acid reductoisomerase (NADP(+)) (491 aa).

In terms of domain architecture, KARI N-terminal Rossmann spans 15–208; sequence AQLGKCRFMG…GGHRAGVLES (194 aa). NADP(+) contacts are provided by residues 45–48, Arg-68, Arg-76, Ser-78, and 108–110; these read CGAQ and DKQ. The active site involves His-132. Residue Gly-158 coordinates NADP(+). 2 KARI C-terminal knotted domains span residues 209–344 and 345–484; these read SFVA…TAPQ and YEGK…MTDM. Mg(2+) contacts are provided by Asp-217, Glu-221, Glu-389, and Glu-393. Ser-414 provides a ligand contact to substrate.

The protein belongs to the ketol-acid reductoisomerase family. The cofactor is Mg(2+).

The catalysed reaction is (2R)-2,3-dihydroxy-3-methylbutanoate + NADP(+) = (2S)-2-acetolactate + NADPH + H(+). It carries out the reaction (2R,3R)-2,3-dihydroxy-3-methylpentanoate + NADP(+) = (S)-2-ethyl-2-hydroxy-3-oxobutanoate + NADPH + H(+). Its pathway is amino-acid biosynthesis; L-isoleucine biosynthesis; L-isoleucine from 2-oxobutanoate: step 2/4. It functions in the pathway amino-acid biosynthesis; L-valine biosynthesis; L-valine from pyruvate: step 2/4. Involved in the biosynthesis of branched-chain amino acids (BCAA). Catalyzes an alkyl-migration followed by a ketol-acid reduction of (S)-2-acetolactate (S2AL) to yield (R)-2,3-dihydroxy-isovalerate. In the isomerase reaction, S2AL is rearranged via a Mg-dependent methyl migration to produce 3-hydroxy-3-methyl-2-ketobutyrate (HMKB). In the reductase reaction, this 2-ketoacid undergoes a metal-dependent reduction by NADPH to yield (R)-2,3-dihydroxy-isovalerate. The protein is Ketol-acid reductoisomerase (NADP(+)) of Escherichia coli O6:K15:H31 (strain 536 / UPEC).